A 274-amino-acid polypeptide reads, in one-letter code: Putative phosphoenolpyruvate synthase regulatory protein (274 aa).

157–164 (GVSRCGKT) serves as a coordination point for ADP.

The protein belongs to the pyruvate, phosphate/water dikinase regulatory protein family. PSRP subfamily.

It catalyses the reaction [pyruvate, water dikinase] + ADP = [pyruvate, water dikinase]-phosphate + AMP + H(+). The catalysed reaction is [pyruvate, water dikinase]-phosphate + phosphate + H(+) = [pyruvate, water dikinase] + diphosphate. Its function is as follows. Bifunctional serine/threonine kinase and phosphorylase involved in the regulation of the phosphoenolpyruvate synthase (PEPS) by catalyzing its phosphorylation/dephosphorylation. The chain is Putative phosphoenolpyruvate synthase regulatory protein from Bordetella avium (strain 197N).